Reading from the N-terminus, the 611-residue chain is Leukotriene A-4 hydrolase (611 aa).

Lys73 bears the N6-acetyllysine mark. A peptide contacts are provided by residues 135-137 (QCQ) and 267-272 (PYGGME). His296 is a Zn(2+) binding site. Catalysis depends on Glu297, which acts as the Proton acceptor. Zn(2+) contacts are provided by His300 and Glu319. Lys337 bears the N6-acetyllysine mark. The active-site Proton donor is the Tyr384. Residue Lys414 is modified to N6-acetyllysine. A Phosphoserine modification is found at Ser416. Residue 564 to 566 (RMK) participates in a peptide binding. The residue at position 573 (Lys573) is an N6-acetyllysine.

The protein belongs to the peptidase M1 family. Monomer. Zn(2+) serves as cofactor. Phosphorylation at Ser-416 inhibits leukotriene-A4 hydrolase activity.

The protein resides in the cytoplasm. The enzyme catalyses leukotriene A4 + H2O = leukotriene B4. It catalyses the reaction (5S,6S)-epoxy-(18R)-hydroxy-(7E,9E,11Z,14Z,16E)-eicosapentaenoate + H2O = resolvin E1. The catalysed reaction is (5S,6S)-epoxy-(18S)-hydroxy-(7E,9E,11Z,14Z,16E)-eicosapentaenoate + H2O = 18S-resolvin E1. It carries out the reaction Release of the N-terminal residue from a tripeptide.. Its pathway is lipid metabolism; leukotriene B4 biosynthesis. With respect to regulation, inhibited by bestatin. The epoxide hydrolase activity is restrained by suicide inactivation that involves binding of LTA4 to Tyr-379. 4-(4-benzylphenyl)thiazol-2-amine (ARM1) selectively inhibits the epoxide hydrolase activity. In terms of biological role, bifunctional zinc metalloenzyme that comprises both epoxide hydrolase (EH) and aminopeptidase activities. Acts as an epoxide hydrolase to catalyze the conversion of LTA4 to the pro-inflammatory mediator leukotriene B4 (LTB4). Also has aminopeptidase activity, with high affinity for N-terminal arginines of various synthetic tripeptides. In addition to its pro-inflammatory EH activity, may also counteract inflammation by its aminopeptidase activity, which inactivates by cleavage another neutrophil attractant, the tripeptide Pro-Gly-Pro (PGP), a bioactive fragment of collagen generated by the action of matrix metalloproteinase-9 (MMP9) and prolylendopeptidase (PREPL). Involved also in the biosynthesis of resolvin E1 and 18S-resolvin E1 from eicosapentaenoic acid, two lipid mediators that show potent anti-inflammatory and pro-resolving actions. The chain is Leukotriene A-4 hydrolase (Lta4h) from Mus musculus (Mouse).